The chain runs to 66 residues: Cold shock protein CspD (66 aa).

Residues 4 to 63 (GKVKWFNNEKGFGFIEVEGGDDVFVHFTAIEGDGYKSLEEGQEVSFEIVEGNRGPQASNV) form the CSD domain.

It is found in the cytoplasm. The sequence is that of Cold shock protein CspD (cspD) from Bacillus subtilis (strain 168).